Here is a 526-residue protein sequence, read N- to C-terminus: MRKSISTFILLSVLSVGQLVAARPRSTNAPPRRRTPQPRRTTSLFINPPALPDLPTVQAVDKLDDALDIDNIQSDILVGMKKTKELFFFFGVEDAATFKSKLASDILPLITTTTEILSTDTQPITAVNIAFSHTGLVALGVNDDIGDTDFVSGQFSEATTVGDRPTLWDPAFAGTKIHGVFLLASNTTEDINTELANIQSILGSSITEIHRLQGAARPGAEEGHEHFGFLDGISQPAVNGFTDTVLPGQTPVDPGLFLLGESGDPSQDSRPSWAVDGSFLVFRQLQQFVPEFNQFLADHPLDIPGRTAEEGSELLGARMVGRWKSGAPVFLSPTQDDPVLGADKNRNNDFNYLVASDPDPGTENHFNQTACPFGAHIRKVHPRGDLSPSAENPHFIIRSSIPYGPEVTDAEAASSTTSVDRGLAFVSYQSNIFNGFVFLQSIWINNVNFIFGKVDPTIGVDPIIGTLGGGPHNISGLNPLIPVNETVDFQDDPWNDVVIPRDFVVSHGGEYFFSPSLSGISAIAAA.

A signal peptide spans 1–21 (MRKSISTFILLSVLSVGQLVA). A propeptide spanning residues 22-63 (ARPRSTNAPPRRRTPQPRRTTSLFINPPALPDLPTVQAVDKL) is cleaved from the precursor. N186 is a glycosylation site (N-linked (GlcNAc...) asparagine). Residue D231 is the Proton acceptor of the active site. The N-linked (GlcNAc...) asparagine glycan is linked to N367. A heme-binding site is contributed by H376. N-linked (GlcNAc...) asparagine glycans are attached at residues N473 and N484.

It belongs to the DyP-type peroxidase family. It depends on heme b as a cofactor.

It localises to the secreted. The enzyme catalyses Reactive Blue 5 + 2 H2O2 = 2,2'-disulfonyl azobenzene + 3-[(4-amino-6-chloro-1,3,5-triazin-2-yl)amino]benzenesulfonate + phthalate + 2 H2O + 2 H(+). It carries out the reaction 2 a phenolic donor + H2O2 = 2 a phenolic radical donor + 2 H2O. Its function is as follows. Manganese-independent peroxidase that is able to convert a large number of compounds, but its physiological substrate is not known. In addition to classic peroxidase substrates (e.g. 2,6-dimethoxyphenol), oxidizes dyes such as Reactive Blue 5 and Reactive Black 5. This Mycena epipterygia (Yellow-stemmed mycena) protein is Dye-decolorizing peroxidase.